The primary structure comprises 91 residues: Probable Fe(2+)-trafficking protein (91 aa).

The protein belongs to the Fe(2+)-trafficking protein family. Monomer.

Its function is as follows. Could be a mediator in iron transactions between iron acquisition and iron-requiring processes, such as synthesis and/or repair of Fe-S clusters in biosynthetic enzymes. The polypeptide is Probable Fe(2+)-trafficking protein (Citrobacter koseri (strain ATCC BAA-895 / CDC 4225-83 / SGSC4696)).